A 230-amino-acid chain; its full sequence is 7-cyano-7-deazaguanine synthase (230 aa).

9-19 serves as a coordination point for ATP; the sequence is ISGGLDSTTCL. Residues Cys-192, Cys-202, Cys-205, and Cys-208 each coordinate Zn(2+).

Belongs to the QueC family. Requires Zn(2+) as cofactor.

The enzyme catalyses 7-carboxy-7-deazaguanine + NH4(+) + ATP = 7-cyano-7-deazaguanine + ADP + phosphate + H2O + H(+). It participates in purine metabolism; 7-cyano-7-deazaguanine biosynthesis. Catalyzes the ATP-dependent conversion of 7-carboxy-7-deazaguanine (CDG) to 7-cyano-7-deazaguanine (preQ(0)). In Myxococcus xanthus (strain DK1622), this protein is 7-cyano-7-deazaguanine synthase.